Here is a 66-residue protein sequence, read N- to C-terminus: Large ribosomal subunit protein bL33c (66 aa).

Belongs to the bacterial ribosomal protein bL33 family.

The protein resides in the plastid. The protein localises to the chloroplast. This Fagopyrum esculentum subsp. ancestrale (Wild buckwheat) protein is Large ribosomal subunit protein bL33c.